The chain runs to 466 residues: MTGSKDYVVADISLAGWGRKELDIAETEMPGLMACREEFGAKKPLKGARITGSLHMTIQTAVLIETLKALGADIRWASCNIFSTQDHAAAAIAEAGIPVFAVKGESLEQYWDYTDRIFQWADGGLSNMILDDGGDATMYILIGARAEAGEDVLSNPQSEEEEYFYAQVKKRLKASPGFFTKQKAAIRGVTEETTTGVNRLYQLQKKGLLPFPAINVNDSVTKSKFDNKYGCKESLVDGIRRGTDTMMAGKVAVVCGYGDVGKGSSASLKGAGARVKVTEVDPICALQAAMDGFEVVTLEDAAPTADIVITTTGNKDVVTLDHMRSMKDMVIVGNIGHFDNEIQVASLRNLKWTNVKPQVDMITFPDGKRMILLSEGRLLNLGNATGHPSFVMSASFTNQVLAQIELFTKGEQYQNQVYVLPKHLDEKVARLHLDKLGARLTELSGEQAAYIGVTPQGPFKPEHYRY.

Residues Thr57, Asp132, and Glu192 each contribute to the substrate site. Residue 193 to 195 coordinates NAD(+); it reads TTT. Positions 222 and 226 each coordinate substrate. NAD(+)-binding positions include Asn227, 256-261, Glu279, Asn314, 335-337, and Asn380; these read GYGDVG and IGH.

The protein belongs to the adenosylhomocysteinase family. NAD(+) serves as cofactor.

Its subcellular location is the cytoplasm. The enzyme catalyses S-adenosyl-L-homocysteine + H2O = L-homocysteine + adenosine. It functions in the pathway amino-acid biosynthesis; L-homocysteine biosynthesis; L-homocysteine from S-adenosyl-L-homocysteine: step 1/1. In terms of biological role, may play a key role in the regulation of the intracellular concentration of adenosylhomocysteine. The sequence is that of Adenosylhomocysteinase from Mesorhizobium japonicum (strain LMG 29417 / CECT 9101 / MAFF 303099) (Mesorhizobium loti (strain MAFF 303099)).